The following is a 199-amino-acid chain: MSVYTRPLARLIEHLQKLPGVGPKTAQRLALHLIQRPEAEIAAFAEALLAAKQQVGHCQRCFHLSSEDLCNICRDPKRDAQTICVVADPRDVIALEKTREYKGLYHVLGGLISPMDGIGPEQLTVQALVRRVAQEQTQEVIMAISPSVEGETTTLYVGQLLKPFTRVTRIAFGLPMGGDLEYADEVTLARALEGRRDLT.

The C4-type zinc-finger motif lies at 58 to 73 (CQRCFHLSSEDLCNIC). The 95-residue stretch at 81 to 175 (QTICVVADPR…RVTRIAFGLP (95 aa)) folds into the Toprim domain.

The protein belongs to the RecR family.

Functionally, may play a role in DNA repair. It seems to be involved in an RecBC-independent recombinational process of DNA repair. It may act with RecF and RecO. This Synechococcus elongatus (strain ATCC 33912 / PCC 7942 / FACHB-805) (Anacystis nidulans R2) protein is Recombination protein RecR.